The chain runs to 210 residues: ATP phosphoribosyltransferase (210 aa).

This sequence belongs to the ATP phosphoribosyltransferase family. Short subfamily. As to quaternary structure, heteromultimer composed of HisG and HisZ subunits.

Its subcellular location is the cytoplasm. It catalyses the reaction 1-(5-phospho-beta-D-ribosyl)-ATP + diphosphate = 5-phospho-alpha-D-ribose 1-diphosphate + ATP. It functions in the pathway amino-acid biosynthesis; L-histidine biosynthesis; L-histidine from 5-phospho-alpha-D-ribose 1-diphosphate: step 1/9. Its function is as follows. Catalyzes the condensation of ATP and 5-phosphoribose 1-diphosphate to form N'-(5'-phosphoribosyl)-ATP (PR-ATP). Has a crucial role in the pathway because the rate of histidine biosynthesis seems to be controlled primarily by regulation of HisG enzymatic activity. In Caldanaerobacter subterraneus subsp. tengcongensis (strain DSM 15242 / JCM 11007 / NBRC 100824 / MB4) (Thermoanaerobacter tengcongensis), this protein is ATP phosphoribosyltransferase.